The chain runs to 99 residues: Large ribosomal subunit protein uL23 (99 aa).

The protein belongs to the universal ribosomal protein uL23 family. In terms of assembly, part of the 50S ribosomal subunit. Contacts protein L29, and trigger factor when it is bound to the ribosome.

In terms of biological role, one of the early assembly proteins it binds 23S rRNA. One of the proteins that surrounds the polypeptide exit tunnel on the outside of the ribosome. Forms the main docking site for trigger factor binding to the ribosome. The chain is Large ribosomal subunit protein uL23 from Stutzerimonas stutzeri (strain A1501) (Pseudomonas stutzeri).